The sequence spans 211 residues: Large ribosomal subunit protein uL3 (211 aa).

This sequence belongs to the universal ribosomal protein uL3 family. In terms of assembly, part of the 50S ribosomal subunit. Forms a cluster with proteins L14 and L19.

Its function is as follows. One of the primary rRNA binding proteins, it binds directly near the 3'-end of the 23S rRNA, where it nucleates assembly of the 50S subunit. This chain is Large ribosomal subunit protein uL3, found in Citrifermentans bemidjiense (strain ATCC BAA-1014 / DSM 16622 / JCM 12645 / Bem) (Geobacter bemidjiensis).